The sequence spans 531 residues: Peptide chain release factor 3 (531 aa).

The tr-type G domain maps to 13 to 282 (SKRRTFAIIS…GLTQWAPSPM (270 aa)). Residues 22-29 (SHPDAGKT), 90-94 (DTPGH), and 144-147 (NKLD) contribute to the GTP site.

The protein belongs to the TRAFAC class translation factor GTPase superfamily. Classic translation factor GTPase family. PrfC subfamily.

It is found in the cytoplasm. Its function is as follows. Increases the formation of ribosomal termination complexes and stimulates activities of RF-1 and RF-2. It binds guanine nucleotides and has strong preference for UGA stop codons. It may interact directly with the ribosome. The stimulation of RF-1 and RF-2 is significantly reduced by GTP and GDP, but not by GMP. The chain is Peptide chain release factor 3 from Vibrio cholerae serotype O1 (strain ATCC 39541 / Classical Ogawa 395 / O395).